A 188-amino-acid polypeptide reads, in one-letter code: Phosphatidylinositol N-acetylglucosaminyltransferase subunit H (188 aa).

It belongs to the PIGH family. Component of the glycosylphosphatidylinositol-N-acetylglucosaminyltransferase (GPI-GnT) complex composed at least by PIGA, PIGC, PIGH, PIGP, PIGQ, PIGY and DPM2. Interacts with PIGQ.

The protein localises to the cytoplasm. Its pathway is glycolipid biosynthesis; glycosylphosphatidylinositol-anchor biosynthesis. Its function is as follows. Part of the glycosylphosphatidylinositol-N-acetylglucosaminyltransferase (GPI-GnT) complex that catalyzes the transfer of N-acetylglucosamine from UDP-N-acetylglucosamine to phosphatidylinositol and participates in the first step of GPI biosynthesis. In Homo sapiens (Human), this protein is Phosphatidylinositol N-acetylglucosaminyltransferase subunit H.